A 330-amino-acid chain; its full sequence is uncharacterized protein (330 aa).

Belongs to the ornithine cyclodeaminase/mu-crystallin family.

It localises to the cytoplasm. This is an uncharacterized protein from Schizosaccharomyces pombe (strain 972 / ATCC 24843) (Fission yeast).